Reading from the N-terminus, the 358-residue chain is 4-hydroxy-2-oxovalerate aldolase 2 (358 aa).

The region spanning 16-268 (VLLHDMCLRD…ETGVDLFKLM (253 aa)) is the Pyruvate carboxyltransferase domain. 24–25 (RD) is a substrate binding site. A Mn(2+)-binding site is contributed by Asp-25. His-28 acts as the Proton acceptor in catalysis. Substrate is bound by residues Ser-178 and His-207. Mn(2+) contacts are provided by His-207 and His-209. A substrate-binding site is contributed by Tyr-298.

This sequence belongs to the 4-hydroxy-2-oxovalerate aldolase family.

It catalyses the reaction (S)-4-hydroxy-2-oxopentanoate = acetaldehyde + pyruvate. This is 4-hydroxy-2-oxovalerate aldolase 2 from Methylibium petroleiphilum (strain ATCC BAA-1232 / LMG 22953 / PM1).